A 589-amino-acid chain; its full sequence is ATP-dependent lipid A-core flippase (589 aa).

A run of 5 helical transmembrane segments spans residues 23-43, 60-80, 153-173, 249-269, and 272-292; these read WPIF…DAGF, LVFI…RGAA, VGLL…FLVI, VGTS…LFFA, and PSFH…IMML. An ABC transmembrane type-1 domain is found at 27–307; sequence LIGVVGMIAV…LTMVNSYIQK (281 aa). An ABC transporter domain is found at 339 to 575; it reads IEYQGVSFAY…NGAYAELYRM (237 aa). Position 373-380 (373-380) interacts with ATP; that stretch reads GRSGAGKS.

The protein belongs to the ABC transporter superfamily. Lipid exporter (TC 3.A.1.106) family. As to quaternary structure, homodimer.

It is found in the cell inner membrane. It carries out the reaction ATP + H2O + lipid A-core oligosaccharideSide 1 = ADP + phosphate + lipid A-core oligosaccharideSide 2.. Functionally, involved in lipopolysaccharide (LPS) biosynthesis. Translocates lipid A-core from the inner to the outer leaflet of the inner membrane. Transmembrane domains (TMD) form a pore in the inner membrane and the ATP-binding domain (NBD) is responsible for energy generation. The chain is ATP-dependent lipid A-core flippase from Coxiella burnetii (strain RSA 493 / Nine Mile phase I).